The sequence spans 182 residues: Ribosome-recycling factor (182 aa).

This sequence belongs to the RRF family.

The protein resides in the cytoplasm. Responsible for the release of ribosomes from messenger RNA at the termination of protein biosynthesis. May increase the efficiency of translation by recycling ribosomes from one round of translation to another. This is Ribosome-recycling factor from Prochlorococcus marinus (strain SARG / CCMP1375 / SS120).